The chain runs to 387 residues: Sulfoacetaldehyde reductase (387 aa).

This sequence belongs to the iron-containing alcohol dehydrogenase family.

It carries out the reaction 2-hydroxyethane-1-sulfonate + NAD(+) = sulfoacetaldehyde + NADH + H(+). Its pathway is organosulfur degradation; alkanesulfonate degradation. In terms of biological role, involved in an anaerobic respiration pathway that converts the sulfonate taurine (2-aminoethanesulfonate) to ammonia, acetate and sulfide. Catalyzes the NADH-dependent reduction of sulfoacetaldehyde to 2-hydroxyethane-1-sulfonate (isethionate). Does not accept acetaldehyde as a substrate. The polypeptide is Sulfoacetaldehyde reductase (Bilophila wadsworthia (strain 3_1_6)).